Consider the following 712-residue polypeptide: DNA topoisomerase 3 (712 aa).

Positions 2–135 (KSLIIAEKPS…TKRLWISSVT (134 aa)) constitute a Toprim domain. Mg(2+) is bound by residues Glu8 and Asp104. A Topo IA-type catalytic domain is found at 152–581 (FNNLYHAALA…EMKAFTNQVV (430 aa)). Residues 186 to 191 (SLGRVQ) form an interaction with DNA region. The O-(5'-phospho-DNA)-tyrosine intermediate role is filled by Tyr305.

Belongs to the type IA topoisomerase family. Mg(2+) serves as cofactor.

The catalysed reaction is ATP-independent breakage of single-stranded DNA, followed by passage and rejoining.. Releases the supercoiling and torsional tension of DNA, which is introduced during the DNA replication and transcription, by transiently cleaving and rejoining one strand of the DNA duplex. Introduces a single-strand break via transesterification at a target site in duplex DNA. The scissile phosphodiester is attacked by the catalytic tyrosine of the enzyme, resulting in the formation of a DNA-(5'-phosphotyrosyl)-enzyme intermediate and the expulsion of a 3'-OH DNA strand. The free DNA strand then undergoes passage around the unbroken strand, thus removing DNA supercoils. Finally, in the religation step, the DNA 3'-OH attacks the covalent intermediate to expel the active-site tyrosine and restore the DNA phosphodiester backbone. This chain is DNA topoisomerase 3, found in Staphylococcus saprophyticus subsp. saprophyticus (strain ATCC 15305 / DSM 20229 / NCIMB 8711 / NCTC 7292 / S-41).